Reading from the N-terminus, the 152-residue chain is UPF0225 protein YchJ (152 aa).

It belongs to the UPF0225 family.

This Shigella flexneri serotype 5b (strain 8401) protein is UPF0225 protein YchJ.